Here is a 481-residue protein sequence, read N- to C-terminus: WASH complex subunit 1 (481 aa).

Residues 1–54 are required for WASH complex assembly; sequence MVRMTQKRYLEGQVYSVPLIQPDLRREEAVHQITDALQYLEMISTDIFTRVSES. Disordered regions lie at residues 273-417 and 429-481; these read SVPA…SGGD and RRKG…DWEA. Pro residues predominate over residues 304-341; it reads APPPPPPPPPPPPEPTHVPVPPPGTSAAPPPPPPPPPM. Positions 359–481 are VCA; the sequence is KGAPSEVVQP…AADDEDDWEA (123 aa). Residues 371-393 enclose the WH2 domain; the sequence is GRASLLESIRNAGGIGKANLRNV. Basic and acidic residues predominate over residues 392–407; that stretch reads NVKERKMEKKKQKEQE.

This sequence belongs to the WASH1 family. As to quaternary structure, component of the WASH complex.

It is found in the early endosome membrane. The protein resides in the recycling endosome membrane. Its function is as follows. Acts as a nucleation-promoting factor at the surface of endosomes, where it recruits and activates the Arp2/3 complex to induce actin polymerization, playing a key role in the fission of tubules that serve as transport intermediates during endosome sorting. This is WASH complex subunit 1 from Danio rerio (Zebrafish).